A 358-amino-acid chain; its full sequence is Probable branched-chain-amino-acid aminotransferase (358 aa).

Position 196 is an N6-(pyridoxal phosphate)lysine (Lys-196).

This sequence belongs to the class-IV pyridoxal-phosphate-dependent aminotransferase family. Pyridoxal 5'-phosphate serves as cofactor.

It catalyses the reaction L-leucine + 2-oxoglutarate = 4-methyl-2-oxopentanoate + L-glutamate. The catalysed reaction is L-isoleucine + 2-oxoglutarate = (S)-3-methyl-2-oxopentanoate + L-glutamate. It carries out the reaction L-valine + 2-oxoglutarate = 3-methyl-2-oxobutanoate + L-glutamate. Its pathway is amino-acid biosynthesis; L-isoleucine biosynthesis; L-isoleucine from 2-oxobutanoate: step 4/4. It participates in amino-acid biosynthesis; L-leucine biosynthesis; L-leucine from 3-methyl-2-oxobutanoate: step 4/4. It functions in the pathway amino-acid biosynthesis; L-valine biosynthesis; L-valine from pyruvate: step 4/4. Its function is as follows. Acts on leucine, isoleucine and valine. The polypeptide is Probable branched-chain-amino-acid aminotransferase (ilvE) (Staphylococcus aureus (strain MRSA252)).